Consider the following 101-residue polypeptide: MKDMMGLLKQAQAMQAKVQDMQAALEQITVEGHAGGGLVKITLTVKGQIRSVSIDPSLLKPEEKEIVEDLVALAYENARHQAEQIMEEKMREVTGGMQLPF.

It belongs to the YbaB/EbfC family. Homodimer.

It is found in the cytoplasm. It localises to the nucleoid. Binds to DNA and alters its conformation. May be involved in regulation of gene expression, nucleoid organization and DNA protection. This Beijerinckia indica subsp. indica (strain ATCC 9039 / DSM 1715 / NCIMB 8712) protein is Nucleoid-associated protein Bind_0255.